The following is a 274-amino-acid chain: Momilactone A synthase (274 aa).

The protein belongs to the short-chain dehydrogenases/reductases (SDR) family.

It catalyses the reaction 3beta-hydroxy-9beta-pimara-7,15-dien-19,6beta-olide + NAD(+) = momilactone A + NADH + H(+). The enzyme catalyses 3beta-hydroxy-9beta-pimara-7,15-dien-19,6beta-olide + NADP(+) = momilactone A + NADPH + H(+). In terms of biological role, involved in momilactone phytoalexins biosynthesis. Catalyzes the last step of momilactone A biosynthesis. The sequence is that of Momilactone A synthase from Oryza sativa subsp. japonica (Rice).